The following is a 230-amino-acid chain: 2,3-bisphosphoglycerate-dependent phosphoglycerate mutase (230 aa).

Residues Arg8–Asn15, Thr21–Gly22, Arg60, Glu87–Tyr90, Lys98, Arg114–Arg115, and Gly183–Asn184 each bind substrate. The active-site Tele-phosphohistidine intermediate is the His9. Glu87 acts as the Proton donor/acceptor in catalysis.

The protein belongs to the phosphoglycerate mutase family. BPG-dependent PGAM subfamily.

It catalyses the reaction (2R)-2-phosphoglycerate = (2R)-3-phosphoglycerate. It participates in carbohydrate degradation; glycolysis; pyruvate from D-glyceraldehyde 3-phosphate: step 3/5. Catalyzes the interconversion of 2-phosphoglycerate and 3-phosphoglycerate. The protein is 2,3-bisphosphoglycerate-dependent phosphoglycerate mutase of Streptococcus agalactiae serotype Ia (strain ATCC 27591 / A909 / CDC SS700).